The chain runs to 338 residues: D-erythrose-4-phosphate dehydrogenase (338 aa).

12–13 (RI) serves as a coordination point for NAD(+). Residues 154–156 (SCT), Arg200, 213–214 (TK), and Arg236 each bind substrate. Catalysis depends on Cys155, which acts as the Nucleophile. Asn318 serves as a coordination point for NAD(+).

This sequence belongs to the glyceraldehyde-3-phosphate dehydrogenase family. Epd subfamily. Homotetramer.

It is found in the cytoplasm. The catalysed reaction is D-erythrose 4-phosphate + NAD(+) + H2O = 4-phospho-D-erythronate + NADH + 2 H(+). It functions in the pathway cofactor biosynthesis; pyridoxine 5'-phosphate biosynthesis; pyridoxine 5'-phosphate from D-erythrose 4-phosphate: step 1/5. Catalyzes the NAD-dependent conversion of D-erythrose 4-phosphate to 4-phosphoerythronate. This Pectobacterium atrosepticum (strain SCRI 1043 / ATCC BAA-672) (Erwinia carotovora subsp. atroseptica) protein is D-erythrose-4-phosphate dehydrogenase.